Here is a 278-residue protein sequence, read N- to C-terminus: MQPITTEIVSRTIIKRPADSHKGNYGRIMLIGGNQNFGGAIIMAATAATYSGAGLVTVATDPSNFTSLHARLPEAMVIDYHQTDTLLNLLAGMDVIVIGPGLGTDTVADQLLTAVLAATHVPQRLVIDGSALTLLAQQARPLPATDIVVTPHQMEWQRLSGIAIKDQTPTANHDAQQRLGVMAVVKAHRTTVYTDERVWFNPGGTPAMATGGMGDTLAGMIGGFVSQFHNFTDAVLSAVYLHSAIADDLAATRYVVLPHQISTRIPTYMHRFSQIERP.

Residues 5 to 272 (TTEIVSRTII…TRIPTYMHRF (268 aa)) form the YjeF C-terminal domain. A40, G103, and H152 together coordinate (6S)-NADPHX. G214 serves as a coordination point for AMP. D215 lines the (6S)-NADPHX pocket.

The protein belongs to the NnrD/CARKD family. In terms of assembly, homotetramer. Mg(2+) is required as a cofactor.

It carries out the reaction (6S)-NADHX + ADP = AMP + phosphate + NADH + H(+). The catalysed reaction is (6S)-NADPHX + ADP = AMP + phosphate + NADPH + H(+). Functionally, catalyzes the dehydration of the S-form of NAD(P)HX at the expense of ADP, which is converted to AMP. Together with NAD(P)HX epimerase, which catalyzes the epimerization of the S- and R-forms, the enzyme allows the repair of both epimers of NAD(P)HX, a damaged form of NAD(P)H that is a result of enzymatic or heat-dependent hydration. In Lactiplantibacillus plantarum (strain ATCC BAA-793 / NCIMB 8826 / WCFS1) (Lactobacillus plantarum), this protein is ADP-dependent (S)-NAD(P)H-hydrate dehydratase.